A 298-amino-acid polypeptide reads, in one-letter code: MRNTILFGVSMILLANLCFGIMSAFVKITADYFSPMENVFYRSITMTLLLLLIYPFKPYRLKSYKQGGFKKLAFRVVVGGLAMLAFFYNIEKISLATATAFSQCAPIYTVLLSPLLLKEKLKRSTLISACIGIVGVVLISDPSVENVGPVEIFMGILSGIFVSLAYITLRDLREYYDKQAVILAFAFGMSLLGLVGMFIDIPFLSTGIHVPRKEDILWISLIGISGTLGQYFLTYAYMNAPAGIIAPIEYTRIVWGLLFGLYLGDTFLDLKSSLGVALILCSGLLIALPALLKELKKI.

10 helical membrane passes run 5–25, 36–56, 76–96, 97–117, 124–144, 147–167, 181–201, 216–236, 244–264, and 272–292; these read ILFG…MSAF, MENV…IYPF, VVVG…ISLA, TATA…PLLL, STLI…DPSV, VGPV…LAYI, VILA…FIDI, ILWI…LTYA, IIAP…LYLG, and SSLG…PALL. The 125-residue stretch at 17–141 folds into the EamA 1 domain; that stretch reads LCFGIMSAFV…GIVGVVLISD (125 aa). In terms of domain architecture, EamA 2 spans 183–288; the sequence is LAFAFGMSLL…ILCSGLLIAL (106 aa).

The protein belongs to the EamA transporter family.

It is found in the cell membrane. This is an uncharacterized protein from Helicobacter pylori (strain ATCC 700392 / 26695) (Campylobacter pylori).